The sequence spans 273 residues: HMP-PP phosphatase (273 aa).

D8 serves as the catalytic Nucleophile. Mg(2+) is bound by residues D8, D10, and D212.

The protein belongs to the HAD-like hydrolase superfamily. Cof family. The cofactor is Mg(2+).

It catalyses the reaction 4-amino-2-methyl-5-(diphosphooxymethyl)pyrimidine + H2O = 4-amino-2-methyl-5-(phosphooxymethyl)pyrimidine + phosphate + H(+). In terms of biological role, catalyzes the hydrolysis of 4-amino-2-methyl-5-hydroxymethylpyrimidine pyrophosphate (HMP-PP) to 4-amino-2-methyl-5-hydroxymethylpyrimidine phosphate (HMP-P). This chain is HMP-PP phosphatase, found in Yersinia pestis bv. Antiqua (strain Antiqua).